Reading from the N-terminus, the 485-residue chain is Dipeptide and tripeptide permease C (485 aa).

Topologically, residues 1–12 (MKTPSQPRAIYY) are cytoplasmic. Residues 13–33 (IVAIQIWEYFSFYGMRALLIL) form a helical membrane-spanning segment. Residues 34–46 (YLTHQLGFDDNHA) lie on the Periplasmic side of the membrane. The helical transmembrane segment at 47–67 (ISLFSAYASLVYVTPILGGWL) threads the bilayer. Over 68–70 (ADR) the chain is Cytoplasmic. A helical membrane pass occupies residues 71 to 93 (LLGNRTAVIAGALLMTLGHVVLG). Topologically, residues 94 to 102 (IDTNSTFSL) are periplasmic. Residues 103–125 (YLALAIIICGYGLFKSNISCLLG) form a helical membrane-spanning segment. The Cytoplasmic segment spans residues 126-140 (ELYDENDHRRDGGFS). The chain crosses the membrane as a helical span at residues 141 to 161 (LLYAAGNIGSIAAPIACGLAA). The Periplasmic segment spans residues 162–164 (QWY). A helical membrane pass occupies residues 165–185 (GWHVGFALAGGGMFIGLLIFL). The Cytoplasmic segment spans residues 186–208 (SGHRHFQSTRSMDKKALTSVKFA). Residues 209 to 229 (LPVWSWLVVMLCLAPVFFTLL) form a helical membrane-spanning segment. Residues 230-234 (LENDW) lie on the Periplasmic side of the membrane. Residues 235–255 (SGYLLAIVCLIAAQIIARMMI) form a helical membrane-spanning segment. The Cytoplasmic segment spans residues 256 to 262 (KFPEHRR). The helical transmembrane segment at 263-283 (ALWQIVLLMFVGTLFWVLAQQ) threads the bilayer. Residues 284–307 (GGSTISLFIDRFVNRQAFNIEVPT) are Periplasmic-facing. A helical membrane pass occupies residues 308 to 328 (ALFQSVNAIAVMLAGVVLAWL). Over 329–340 (ASPESRGNSTLR) the chain is Cytoplasmic. The helical transmembrane segment at 341–361 (VWLKFAFGLLLMACGFMLLAF) threads the bilayer. Residues 362–375 (DARHAAADGQASMG) are Periplasmic-facing. Residues 376-396 (VMISGLALMGFAELFIDPVAI) form a helical membrane-spanning segment. At 397-406 (AQITRLKMSG) the chain is on the cytoplasmic side. A helical membrane pass occupies residues 407 to 427 (VLTGIYMLATGAVANWLAGVV). Residues 428–446 (AQQTTESQISGMAIAAYQR) lie on the Periplasmic side of the membrane. The chain crosses the membrane as a helical span at residues 447–467 (FFSQMGEWTLACVAIIVVLAF). Topologically, residues 468 to 485 (ATRFLFSTPTNMIQESND) are cytoplasmic.

It belongs to the major facilitator superfamily. Proton-dependent oligopeptide transporter (POT/PTR) (TC 2.A.17) family. As to quaternary structure, monomer.

Its subcellular location is the cell inner membrane. Functionally, proton-dependent permease that transports di- and tripeptides. Shows significantly higher specificity towards dipeptides than tripeptides. Has a preference for dipeptides with a C-terminal Lys residue. Can bind Ala-Lys, Lys-Ala, Ala-Ala. Can also transport alanine and trialanine. This Escherichia coli (strain K12) protein is Dipeptide and tripeptide permease C.